The following is a 294-amino-acid chain: Eukaryotic translation initiation factor 3 subunit G (294 aa).

Disordered regions lie at residues Met1–Ile43 and Glu160–Thr211. Residues Gly194–Thr211 show a composition bias toward basic and acidic residues. Residues Ala212–Pro290 form the RRM domain.

Belongs to the eIF-3 subunit G family. Component of the eukaryotic translation initiation factor 3 (eIF-3) complex.

It is found in the cytoplasm. Functionally, RNA-binding component of the eukaryotic translation initiation factor 3 (eIF-3) complex, which is involved in protein synthesis of a specialized repertoire of mRNAs and, together with other initiation factors, stimulates binding of mRNA and methionyl-tRNAi to the 40S ribosome. The eIF-3 complex specifically targets and initiates translation of a subset of mRNAs involved in cell proliferation. This subunit can bind 18S rRNA. The protein is Eukaryotic translation initiation factor 3 subunit G of Nematostella vectensis (Starlet sea anemone).